The primary structure comprises 354 residues: Homeobox protein Nkx-2.4 (354 aa).

Residues 188 to 247 constitute a DNA-binding region (homeobox); sequence RRKRRVLFSQAQVYELERRFKQQKYLSAPEREHLASMIHLTPTQVKIWFQNHRYKMKRQA. Residues 245–329 form a disordered region; that stretch reads RQAKDKAAQQ…PALHGPGGGL (85 aa). Pro residues predominate over residues 262–272; the sequence is GPPPPPPPPSP. Residues 290-304 show a composition bias toward low complexity; sequence GAGTPTPGQGGQQPQ.

Belongs to the NK-2 homeobox family. As to expression, in the embryo it is detected in the posterior hypothalamus and later in the head. In the adult it is detected only in testis.

Its subcellular location is the nucleus. Its function is as follows. Probable transcription factor. This is Homeobox protein Nkx-2.4 (Nkx2-4) from Mus musculus (Mouse).